A 1447-amino-acid chain; its full sequence is Regulator of G-protein signaling 12 (1447 aa).

Positions Met1–Arg21 are disordered. The 77-residue stretch at Ser22 to Gly98 folds into the PDZ domain. Phosphoserine is present on residues Ser172 and Ser195. Lys196 participates in a covalent cross-link: Glycyl lysine isopeptide (Lys-Gly) (interchain with G-Cter in SUMO2). The region spanning Val228–Phe340 is the PID domain. Disordered regions lie at residues Ala410–Phe429 and Leu443–Gly482. Residues His413–Gly425 show a composition bias toward polar residues. Residues Gly451–Gly464 show a composition bias toward gly residues. Residues Arg524 and Arg633 each carry the omega-N-methylarginine modification. The interval Asn618–Arg652 is disordered. Phosphoserine occurs at positions 661 and 671. The RGS domain occupies Ser715–Ile832. The span at Asp843–Ser853 shows a compositional bias: polar residues. A disordered region spans residues Asp843 to Ala941. Phosphoserine is present on residues Ser850 and Ser879. Positions Glu914 to Leu923 are enriched in basic and acidic residues. The residue at position 943 (Ser943) is a Phosphoserine. RBD domains follow at residues Lys962–Arg1032 and Leu1034–Lys1104. Over residues Glu1103–Lys1117 the composition is skewed to basic and acidic residues. The segment at Glu1103–Glu1169 is disordered. Residues Lys1122–Ala1136 show a composition bias toward polar residues. Residues Ile1151–Glu1169 are compositionally biased toward basic and acidic residues. Positions Ala1187–Leu1209 constitute a GoLoco domain. Residues Gly1240–Val1447 are disordered. Residues Arg1244–Gly1258 show a composition bias toward polar residues. 2 stretches are compositionally biased toward low complexity: residues Ser1267–Ser1280 and Pro1289–Pro1298. Residues Thr1301–Thr1313 show a composition bias toward polar residues.

In terms of assembly, interacts with GNAI1. Interacts with GNAI2 and GNAI3; the interactions are GDP-dependent. Isoform 3 is brain specific.

It is found in the nucleus. It localises to the cytoplasm. The protein localises to the cell projection. The protein resides in the dendrite. Its subcellular location is the synapse. It is found in the nucleus matrix. Its function is as follows. Regulates G protein-coupled receptor signaling cascades. Inhibits signal transduction by increasing the GTPase activity of G protein alpha subunits, thereby driving them into their inactive GDP-bound form. In terms of biological role, behaves as a cell cycle-dependent transcriptional repressor, promoting inhibition of S-phase DNA synthesis. The protein is Regulator of G-protein signaling 12 (RGS12) of Homo sapiens (Human).